Reading from the N-terminus, the 504-residue chain is Maturase K (504 aa).

Belongs to the intron maturase 2 family. MatK subfamily.

The protein resides in the plastid. The protein localises to the chloroplast. In terms of biological role, usually encoded in the trnK tRNA gene intron. Probably assists in splicing its own and other chloroplast group II introns. The protein is Maturase K of Turritis glabra (Tower mustard).